We begin with the raw amino-acid sequence, 202 residues long: ATP-dependent Clp protease proteolytic subunit (202 aa).

Ser106 functions as the Nucleophile in the catalytic mechanism. Residue His131 is part of the active site.

Belongs to the peptidase S14 family. As to quaternary structure, fourteen ClpP subunits assemble into 2 heptameric rings which stack back to back to give a disk-like structure with a central cavity, resembling the structure of eukaryotic proteasomes.

It is found in the cytoplasm. The catalysed reaction is Hydrolysis of proteins to small peptides in the presence of ATP and magnesium. alpha-casein is the usual test substrate. In the absence of ATP, only oligopeptides shorter than five residues are hydrolyzed (such as succinyl-Leu-Tyr-|-NHMec, and Leu-Tyr-Leu-|-Tyr-Trp, in which cleavage of the -Tyr-|-Leu- and -Tyr-|-Trp bonds also occurs).. Functionally, cleaves peptides in various proteins in a process that requires ATP hydrolysis. Has a chymotrypsin-like activity. Plays a major role in the degradation of misfolded proteins. The polypeptide is ATP-dependent Clp protease proteolytic subunit (Shewanella oneidensis (strain ATCC 700550 / JCM 31522 / CIP 106686 / LMG 19005 / NCIMB 14063 / MR-1)).